A 244-amino-acid polypeptide reads, in one-letter code: HTH-type transcriptional regulator Cmr (244 aa).

41-160 is an a nucleoside 3',5'-cyclic phosphate binding site; it reads GSAPLHRDDV…RRWLSSVAQR (120 aa). Residues 174–237 enclose the HTH crp-type domain; the sequence is RPLPAQVAQL…YAVIEITDQH (64 aa). The H-T-H motif DNA-binding region spans 197-216; that stretch reads QRTLAAMLGAQRPSINKILK.

Its function is as follows. Positively regulates the expression of at least groEL2. The chain is HTH-type transcriptional regulator Cmr (cmr) from Mycobacterium tuberculosis (strain CDC 1551 / Oshkosh).